We begin with the raw amino-acid sequence, 281 residues long: Probable endonuclease 4 (281 aa).

Residues H69, H109, E145, D179, H182, H216, D229, H231, and E261 each coordinate Zn(2+).

The protein belongs to the AP endonuclease 2 family. The cofactor is Zn(2+).

The catalysed reaction is Endonucleolytic cleavage to 5'-phosphooligonucleotide end-products.. Endonuclease IV plays a role in DNA repair. It cleaves phosphodiester bonds at apurinic or apyrimidinic (AP) sites, generating a 3'-hydroxyl group and a 5'-terminal sugar phosphate. The sequence is that of Probable endonuclease 4 from Buchnera aphidicola subsp. Acyrthosiphon pisum (strain APS) (Acyrthosiphon pisum symbiotic bacterium).